The primary structure comprises 343 residues: Glycerol-3-phosphate dehydrogenase [NAD(P)+] (343 aa).

The NADPH site is built by serine 11, tryptophan 12, arginine 32, and lysine 106. The sn-glycerol 3-phosphate site is built by lysine 106, glycine 137, and serine 139. NADPH is bound at residue alanine 141. Positions 192, 245, 255, 256, and 257 each coordinate sn-glycerol 3-phosphate. Lysine 192 serves as the catalytic Proton acceptor. NADPH is bound at residue arginine 256. Residues valine 280 and glutamate 282 each coordinate NADPH.

Belongs to the NAD-dependent glycerol-3-phosphate dehydrogenase family.

It is found in the cytoplasm. It carries out the reaction sn-glycerol 3-phosphate + NAD(+) = dihydroxyacetone phosphate + NADH + H(+). It catalyses the reaction sn-glycerol 3-phosphate + NADP(+) = dihydroxyacetone phosphate + NADPH + H(+). The protein operates within membrane lipid metabolism; glycerophospholipid metabolism. Functionally, catalyzes the reduction of the glycolytic intermediate dihydroxyacetone phosphate (DHAP) to sn-glycerol 3-phosphate (G3P), the key precursor for phospholipid synthesis. This is Glycerol-3-phosphate dehydrogenase [NAD(P)+] from Syntrophomonas wolfei subsp. wolfei (strain DSM 2245B / Goettingen).